An 891-amino-acid polypeptide reads, in one-letter code: DNA mismatch repair protein MutS (891 aa).

634–641 (GPNMGGKS) is a binding site for ATP.

This sequence belongs to the DNA mismatch repair MutS family.

Its function is as follows. This protein is involved in the repair of mismatches in DNA. It is possible that it carries out the mismatch recognition step. This protein has a weak ATPase activity. This chain is DNA mismatch repair protein MutS, found in Burkholderia pseudomallei (strain 1106a).